The primary structure comprises 159 residues: UPF0699 transmembrane protein YdbS (159 aa).

The next 2 membrane-spanning stretches (helical) occupy residues 22–42 (IIISAVCLLIVIAVAVLSYYF) and 47–67 (WISGVLGAVWLLGSIVTVFII).

This sequence belongs to the UPF0699 family.

Its subcellular location is the cell membrane. In Bacillus subtilis (strain 168), this protein is UPF0699 transmembrane protein YdbS (ydbS).